Reading from the N-terminus, the 434-residue chain is MKFPGKRKSKHYFPVNARDPLLQQFQPENETSAAWVVGIDQTLVDIEAKVDDEFIERYGLSAGHSLVIEDDVAEALYQELKQKNLITHQFAGGTIGNTMHNYSVLADDRSVLLGVMCSNIEIGSYAYRYLCNTSSRTDLNYLQGVDGPIGRCFTLIGESGERTFAISPGHMNQLRAESIPEDVIAGASALVLTSYLVRCKPGEPMPEATMKAIEYAKKYNVPVVLTLGTKFVIAENPQWWQQFLKDHVSILAMNEDEAEALTGESDPLLASDKALDWVDLVLCTAGPIGLYMAGFTEDEAKRKTQHPLLPGAIAEFNQYEFSRAMRHKDCQNPLRVYSHIAPYMGGPEKIMNTNGAGDGALAALLHDITANSYHRSNVPNSSKHKFTWLTYSSLAQVCKYANRVSYQVLNQHSPRLTRGLPEREDSLEESYWDR.

GMP contacts are provided by residues 40–45 (DQTLVD), 93–97 (GTIGN), and R198. Residues 284–289 (TAGPIG), G357, and N402 each bind ATP.

This sequence belongs to the carbohydrate kinase PfkB family. Requires Mg(2+) as cofactor.

It catalyses the reaction guanosine + ATP = GMP + ADP + H(+). The enzyme catalyses inosine + ATP = IMP + ADP + H(+). Its pathway is purine metabolism; IMP biosynthesis via salvage pathway; IMP from inosine: step 1/1. It functions in the pathway purine metabolism; GMP biosynthesis via salvage pathway. Its function is as follows. Catalyzes the phosphorylation of guanosine and inosine to GMP and IMP, respectively. This chain is Guanosine-inosine kinase, found in Escherichia coli O157:H7.